Consider the following 883-residue polypeptide: Alanine--tRNA ligase (883 aa).

Residues His560, His564, Cys665, and His669 each contribute to the Zn(2+) site.

Belongs to the class-II aminoacyl-tRNA synthetase family. Zn(2+) is required as a cofactor.

It localises to the cytoplasm. It catalyses the reaction tRNA(Ala) + L-alanine + ATP = L-alanyl-tRNA(Ala) + AMP + diphosphate. Functionally, catalyzes the attachment of alanine to tRNA(Ala) in a two-step reaction: alanine is first activated by ATP to form Ala-AMP and then transferred to the acceptor end of tRNA(Ala). Also edits incorrectly charged Ser-tRNA(Ala) and Gly-tRNA(Ala) via its editing domain. The polypeptide is Alanine--tRNA ligase (Mesomycoplasma hyopneumoniae (strain 232) (Mycoplasma hyopneumoniae)).